The chain runs to 198 residues: Ribonuclease HII (198 aa).

The region spanning 10-198 is the RNase H type-2 domain; that stretch reads HLVAGVDEVG…PVKRALELAS (189 aa). A divalent metal cation contacts are provided by D16, E17, and D108.

This sequence belongs to the RNase HII family. Mn(2+) serves as cofactor. Mg(2+) is required as a cofactor.

It is found in the cytoplasm. The enzyme catalyses Endonucleolytic cleavage to 5'-phosphomonoester.. Its function is as follows. Endonuclease that specifically degrades the RNA of RNA-DNA hybrids. This is Ribonuclease HII from Salmonella arizonae (strain ATCC BAA-731 / CDC346-86 / RSK2980).